The sequence spans 139 residues: uncharacterized protein (139 aa).

This sequence to E.coli YecT.

This is an uncharacterized protein from Rhizobium meliloti (strain 1021) (Ensifer meliloti).